The primary structure comprises 90 residues: Co-chaperonin GroES (90 aa).

The protein belongs to the GroES chaperonin family. In terms of assembly, heptamer of 7 subunits arranged in a ring. Interacts with the chaperonin GroEL.

It is found in the cytoplasm. Functionally, together with the chaperonin GroEL, plays an essential role in assisting protein folding. The GroEL-GroES system forms a nano-cage that allows encapsulation of the non-native substrate proteins and provides a physical environment optimized to promote and accelerate protein folding. GroES binds to the apical surface of the GroEL ring, thereby capping the opening of the GroEL channel. The chain is Co-chaperonin GroES from Fusobacterium nucleatum subsp. polymorphum (Fusobacterium polymorphum).